A 173-amino-acid chain; its full sequence is Ribosome maturation factor RimM (173 aa).

One can recognise a PRC barrel domain in the interval 97-171 (EGEFFYHEII…QITIEPMEGL (75 aa)).

Belongs to the RimM family. Binds ribosomal protein uS19.

It localises to the cytoplasm. An accessory protein needed during the final step in the assembly of 30S ribosomal subunit, possibly for assembly of the head region. Essential for efficient processing of 16S rRNA. May be needed both before and after RbfA during the maturation of 16S rRNA. It has affinity for free ribosomal 30S subunits but not for 70S ribosomes. In Halalkalibacterium halodurans (strain ATCC BAA-125 / DSM 18197 / FERM 7344 / JCM 9153 / C-125) (Bacillus halodurans), this protein is Ribosome maturation factor RimM.